A 367-amino-acid chain; its full sequence is uncharacterized protein (367 aa).

The helical transmembrane segment at 8–28 threads the bilayer; that stretch reads VLIGTFVLAAILAVFGFIYWL.

The protein resides in the membrane. This is an uncharacterized protein from Bradyrhizobium diazoefficiens (strain JCM 10833 / BCRC 13528 / IAM 13628 / NBRC 14792 / USDA 110).